We begin with the raw amino-acid sequence, 101 residues long: Protein RnfH (101 aa).

It belongs to the UPF0125 (RnfH) family.

This is Protein RnfH from Coxiella burnetii (strain CbuK_Q154) (Coxiella burnetii (strain Q154)).